The chain runs to 298 residues: Octopine catabolism/uptake operon regulatory protein OccR (298 aa).

In terms of domain architecture, HTH lysR-type spans 1–58 (MNLRQVEAFRAVMLTGQMTAAAELMLVTQPAISRLIKDFEQATKLQLFERRGNHIIPT). Residues 18–37 (MTAAAELMLVTQPAISRLIK) constitute a DNA-binding region (H-T-H motif).

It belongs to the LysR transcriptional regulatory family.

In terms of biological role, positive regulatory protein for the occ operon involved in octopine catabolism and uptake. Also acts as a negative regulator of its expression. The polypeptide is Octopine catabolism/uptake operon regulatory protein OccR (occR) (Agrobacterium tumefaciens (strain Ach5)).